Consider the following 166-residue polypeptide: MISDESDRFNPRDPKPADAGKPSKSAKRREARKLATQALYQWHMAKHSLNEVEAQFRVDNDFSDVDGAYFREILHGVPAKKVEIDEALKPCLDTPLEELDPVELSVLRLSAWEFMMRADVPYRVVINEGVELAKVFGATDGHKFVNGVLDKLAPRLREAEVRANKR.

Residues 1-18 (MISDESDRFNPRDPKPAD) show a composition bias toward basic and acidic residues. Residues 1–30 (MISDESDRFNPRDPKPADAGKPSKSAKRRE) form a disordered region.

It belongs to the NusB family.

Functionally, involved in transcription antitermination. Required for transcription of ribosomal RNA (rRNA) genes. Binds specifically to the boxA antiterminator sequence of the ribosomal RNA (rrn) operons. The protein is Transcription antitermination protein NusB of Pseudomonas entomophila (strain L48).